Reading from the N-terminus, the 369-residue chain is Phosphoribosyl pyrophosphate synthase-associated protein 2 (369 aa).

Methionine 1 is modified (N-acetylmethionine). A phosphoserine mark is found at serine 219, serine 227, and serine 233.

It belongs to the ribose-phosphate pyrophosphokinase family. Binds to PRPS1 and PRPS2. Ubiquitous.

Seems to play a negative regulatory role in 5-phosphoribose 1-diphosphate synthesis. The sequence is that of Phosphoribosyl pyrophosphate synthase-associated protein 2 (Prpsap2) from Rattus norvegicus (Rat).